We begin with the raw amino-acid sequence, 421 residues long: Adenosylhomocysteinase (421 aa).

Positions 128 and 153 each coordinate substrate. 154 to 156 (TTT) provides a ligand contact to NAD(+). Substrate is bound by residues Lys183 and Asp187. NAD(+) is bound by residues Asn188, 217–222 (GYGWCG), Glu240, 296–298 (AGH), and Asn343.

This sequence belongs to the adenosylhomocysteinase family. The cofactor is NAD(+).

The protein localises to the cytoplasm. The catalysed reaction is S-adenosyl-L-homocysteine + H2O = L-homocysteine + adenosine. It participates in amino-acid biosynthesis; L-homocysteine biosynthesis; L-homocysteine from S-adenosyl-L-homocysteine: step 1/1. Its function is as follows. May play a key role in the regulation of the intracellular concentration of adenosylhomocysteine. The sequence is that of Adenosylhomocysteinase from Thermococcus kodakarensis (strain ATCC BAA-918 / JCM 12380 / KOD1) (Pyrococcus kodakaraensis (strain KOD1)).